We begin with the raw amino-acid sequence, 1061 residues long: Protein pid-5 (1061 aa).

This sequence belongs to the peptidase M24B family. In terms of assembly, may interact with pid-2, app-1 and prmt-5.

It localises to the cytoplasm. Its subcellular location is the perinuclear region. The protein resides in the P-body. Functionally, together with pid-4, it is involved in gene silencing mediated by a class of 21 nucleotide PIWI-interacting RNAs (piRNAs) that possess a uracil residue at the 5'-end (also called 21U-RNAs) and guide the Piwi protein prg-1 to its DNA targets for silencing. Together with pid-4, it is required for the biogenesis of secondary and tertiary 22G-siRNAs. Specifically, promotes the production of 22G-siRNAs from the 5' end of target mRNAs. Together with pid-4, plays a role in small RNA-directed transgenerational epigenetic inheritance (also called RNAe) over several generations and germline immortality. Together with pid-4, plays a role in the formation of liquid-like condensates in the cytoplasm called Z granules. This is Protein pid-5 from Caenorhabditis elegans.